A 129-amino-acid chain; its full sequence is Ribosome-binding factor A (129 aa).

The protein belongs to the RbfA family. As to quaternary structure, monomer. Binds 30S ribosomal subunits, but not 50S ribosomal subunits or 70S ribosomes.

The protein resides in the cytoplasm. Its function is as follows. One of several proteins that assist in the late maturation steps of the functional core of the 30S ribosomal subunit. Associates with free 30S ribosomal subunits (but not with 30S subunits that are part of 70S ribosomes or polysomes). Required for efficient processing of 16S rRNA. May interact with the 5'-terminal helix region of 16S rRNA. The chain is Ribosome-binding factor A from Stutzerimonas stutzeri (strain A1501) (Pseudomonas stutzeri).